We begin with the raw amino-acid sequence, 112 residues long: Protein Churchill (112 aa).

Residues Cys2, Cys5, Cys30, Cys33, His59, Cys61, Cys64, His66, His71, Cys88, and Cys91 each coordinate Zn(2+).

The protein belongs to the Churchill family.

Its function is as follows. Transcriptional activator that mediates FGF signaling during neural development. Plays a role in the regulation of cell movement. Does not bind DNA by itself. This is Protein Churchill (CHURC1) from Bos taurus (Bovine).